The primary structure comprises 332 residues: Putative ankyrin repeat protein R896 (332 aa).

5 ANK repeats span residues 159-188 (GNDNAMIIAAQKGNLEIVKFLVESGANVKS), 190-218 (DNCAVRLASEFGHLDVVEYLYKSGANVKA), 219-248 (DGNYAITWACKNGHLPVIEFLTSVGADIKA), 249-278 (AQNLPIKMAAIGGHLNVIKYLVDRGANIST), and 280-308 (NDYVFNIACRNGHTDLAEYAVSLGADIFS).

This Acanthamoeba polyphaga mimivirus (APMV) protein is Putative ankyrin repeat protein R896.